Consider the following 233-residue polypeptide: Octanoyltransferase (233 aa).

The BPL/LPL catalytic domain occupies 36-211 (DTTPDEIWLV…EFTRQLGYPT (176 aa)). Residues 75 to 82 (RGGQVTYH), 142 to 144 (SLG), and 155 to 157 (GLA) contribute to the substrate site. Cys173 functions as the Acyl-thioester intermediate in the catalytic mechanism.

Belongs to the LipB family.

Its subcellular location is the cytoplasm. The enzyme catalyses octanoyl-[ACP] + L-lysyl-[protein] = N(6)-octanoyl-L-lysyl-[protein] + holo-[ACP] + H(+). Its pathway is protein modification; protein lipoylation via endogenous pathway; protein N(6)-(lipoyl)lysine from octanoyl-[acyl-carrier-protein]: step 1/2. Its function is as follows. Catalyzes the transfer of endogenously produced octanoic acid from octanoyl-acyl-carrier-protein onto the lipoyl domains of lipoate-dependent enzymes. Lipoyl-ACP can also act as a substrate although octanoyl-ACP is likely to be the physiological substrate. The protein is Octanoyltransferase of Yersinia pseudotuberculosis serotype O:3 (strain YPIII).